The sequence spans 575 residues: Intermediate filament protein ifd-1 (575 aa).

The interval 1–56 (MSKLNPRVAHNPVLSRIIESGRTNLPSGITSAGSLSAYAQAAAVTIRDNRDREKRE) is head. The IF rod domain occupies 53 to 406 (EKREIADLNN…KLMEQAENLR (354 aa)). A coil 1A region spans residues 57 to 88 (IADLNNRLARYVEKVRFLEAQNRVLENDIGLF). The interval 89 to 102 (RQAAHIHTGKVRDY) is linker 1. Positions 103 to 240 (YDAEKTSLAT…STHEIAIREE (138 aa)) are coil 1B. Positions 241–258 (INKARRDSTDKNREFFHR) are linker 12. Positions 259-408 (ELHMSMKEIR…MEQAENLRTS (150 aa)) are coil 2. Residues 409-572 (YQSDFVIDTP…DEVGWYAHVS (164 aa)) are tail. In terms of domain architecture, LTD spans 459–575 (NTQQFRSYGK…GWYAHVSYSH (117 aa)).

It belongs to the intermediate filament family.

It localises to the cytoplasm. Functionally, cytoplasmic intermediate filaments provide mechanical strength to cells. Not essential protein. The sequence is that of Intermediate filament protein ifd-1 from Caenorhabditis elegans.